A 223-amino-acid chain; its full sequence is Kinetochore protein Spc25 (223 aa).

Residues 51-116 (RHQRKVGKLQ…QRKNEIMERI (66 aa)) adopt a coiled-coil conformation.

Belongs to the SPC25 family. Component of the Ndc80 complex, which is composed of Ndc80, Nuf2 and Spc25.

It is found in the nucleus. The protein localises to the chromosome. Its subcellular location is the centromere. It localises to the kinetochore. In terms of biological role, acts as a component of the essential kinetochore-associated Ndc80 complex, which is required for chromosome segregation and spindle checkpoint activity during meiosis and mitosis. Required for kinetochore integrity and the organization of stable microtubule binding sites in the outer plate of the kinetochore. Participates in SAC signaling that responds specifically to disruptions in spindle microtubule dynamics. The NDC80 complex synergistically enhances the affinity of the SKA1 complex for microtubules and may allow the NDC80 complex to track depolymerizing microtubules. The sequence is that of Kinetochore protein Spc25 from Drosophila yakuba (Fruit fly).